The chain runs to 186 residues: Outer-membrane lipoprotein LolB (186 aa).

The first 16 residues, 1-16, serve as a signal peptide directing secretion; that stretch reads MRRLAVIASLAWALGG. A lipid anchor (N-palmitoyl cysteine) is attached at Cys17. Cys17 carries the S-diacylglycerol cysteine lipid modification.

It belongs to the LolB family. As to quaternary structure, monomer.

The protein resides in the cell outer membrane. Plays a critical role in the incorporation of lipoproteins in the outer membrane after they are released by the LolA protein. The chain is Outer-membrane lipoprotein LolB from Thiobacillus denitrificans (strain ATCC 25259 / T1).